The chain runs to 156 residues: Small ribosomal subunit protein uS7c (156 aa).

This sequence belongs to the universal ribosomal protein uS7 family. Part of the 30S ribosomal subunit.

The protein localises to the plastid. It localises to the chloroplast. In terms of biological role, one of the primary rRNA binding proteins, it binds directly to 16S rRNA where it nucleates assembly of the head domain of the 30S subunit. This chain is Small ribosomal subunit protein uS7c (rps7), found in Pisum sativum (Garden pea).